The following is a 330-amino-acid chain: 7,8-didemethyl-8-hydroxy-5-deazariboflavin synthase (330 aa).

A Radical SAM core domain is found at 13-253 (VTFSKNAFIP…EDISIQVPPN (241 aa)). [4Fe-4S] cluster is bound by residues cysteine 27, cysteine 31, and cysteine 34.

Belongs to the radical SAM superfamily. CofG family. As to quaternary structure, consists of two subunits, CofG and CofH. Requires [4Fe-4S] cluster as cofactor.

The enzyme catalyses 5-amino-5-(4-hydroxybenzyl)-6-(D-ribitylimino)-5,6-dihydrouracil + S-adenosyl-L-methionine = 7,8-didemethyl-8-hydroxy-5-deazariboflavin + 5'-deoxyadenosine + L-methionine + NH4(+) + H(+). Its pathway is cofactor biosynthesis; coenzyme F0 biosynthesis. Its function is as follows. Catalyzes the radical-mediated synthesis of 7,8-didemethyl-8-hydroxy-5-deazariboflavin from 5-amino-5-(4-hydroxybenzyl)-6-(D-ribitylimino)-5,6-dihydrouracil. This Methanococcus maripaludis (strain DSM 14266 / JCM 13030 / NBRC 101832 / S2 / LL) protein is 7,8-didemethyl-8-hydroxy-5-deazariboflavin synthase.